The primary structure comprises 244 residues: Carboxy-S-adenosyl-L-methionine synthase (244 aa).

S-adenosyl-L-methionine-binding positions include Y41, 66-68, 91-92, 119-120, N134, and R201; these read GCS, DN, and DI.

It belongs to the class I-like SAM-binding methyltransferase superfamily. Cx-SAM synthase family. Homodimer.

The catalysed reaction is prephenate + S-adenosyl-L-methionine = carboxy-S-adenosyl-L-methionine + 3-phenylpyruvate + H2O. Its function is as follows. Catalyzes the conversion of S-adenosyl-L-methionine (SAM) to carboxy-S-adenosyl-L-methionine (Cx-SAM). The chain is Carboxy-S-adenosyl-L-methionine synthase from Photobacterium profundum (strain SS9).